The primary structure comprises 362 residues: Malate dehydrogenase (362 aa).

Belongs to the LDH2/MDH2 oxidoreductase family. As to quaternary structure, homodimer.

The protein localises to the cytoplasm. It carries out the reaction (S)-malate + NAD(+) = oxaloacetate + NADH + H(+). The polypeptide is Malate dehydrogenase (mdh) (Pyrococcus abyssi (strain GE5 / Orsay)).